A 236-amino-acid chain; its full sequence is Probable glutathione S-transferase BZ2 (236 aa).

The GST N-terminal domain maps to methionine 1–glycine 80. Glutathione contacts are provided by residues serine 9, lysine 37, isoleucine 51, and glutamate 64–serine 65. Positions aspartate 92–phenylalanine 221 constitute a GST C-terminal domain.

The protein belongs to the GST superfamily. HSP26 family.

The catalysed reaction is RX + glutathione = an S-substituted glutathione + a halide anion + H(+). It participates in pigment biosynthesis; anthocyanin biosynthesis. The chain is Probable glutathione S-transferase BZ2 (BZ2) from Zea mays (Maize).